A 204-amino-acid polypeptide reads, in one-letter code: Prephenate decarboxylase (204 aa).

This sequence belongs to the prephenate decarboxylase family.

Its subcellular location is the cytoplasm. The catalysed reaction is prephenate + H(+) = 3-[(4R)-4-hydroxycyclohexa-1,5-dien-1-yl]-2-oxopropanoate + CO2. The protein operates within antibiotic biosynthesis; bacilysin biosynthesis. In terms of biological role, part of the bacABCDEF operon responsible for the biosynthesis of the nonribosomally synthesized dipeptide antibiotic bacilysin, composed of L-alanine and L-anticapsin. Bacilysin is an irreversible inactivator of the glutaminase domain of glucosamine synthetase. BacA is an unusual prephenate decarboxylase that avoids the typical aromatization of the cyclohexadienol ring of prephenate. BacA catalyzes the protonation of prephenate (1-carboxy-4-hydroxy-alpha-oxo-2,5-cyclohexadiene-1-propanoic acid) at C6 position, followed by a decarboxylation to produce the endocyclic-delta(4),delta(8)-7R-dihydro-hydroxyphenylpyruvate (en-H2HPP). En-H2HPP is able to undergo a slow nonenzymatic isomerization to produce the exocyclic-delta(3),delta(5)-dihydro-hydroxyphenylpyruvate (ex-H2HPP). BacA isomerizes only the pro-R double bond in prephenate. The polypeptide is Prephenate decarboxylase (Bacillus subtilis (strain 168)).